We begin with the raw amino-acid sequence, 250 residues long: Probable transcriptional regulatory protein SYNPCC7002_A1640 (250 aa).

Belongs to the TACO1 family.

Its subcellular location is the cytoplasm. The protein is Probable transcriptional regulatory protein SYNPCC7002_A1640 of Picosynechococcus sp. (strain ATCC 27264 / PCC 7002 / PR-6) (Agmenellum quadruplicatum).